The chain runs to 255 residues: Ornithine decarboxylase antizyme (255 aa).

Belongs to the ODC antizyme family. Interacts with ODC and thereby sterically blocks ODC homodimerization.

Functionally, ornithine decarboxylase (ODC) antizyme protein that negatively regulates ODC activity and intracellular polyamine biosynthesis in response to increased intracellular polyamine levels. Binds to ODC monomers, inhibiting the assembly of the functional ODC homodimer, and targets the monomers for ubiquitin-independent proteolytic destruction by the 26S proteasome. This chain is Ornithine decarboxylase antizyme (OAZ1), found in Eremothecium gossypii (strain ATCC 10895 / CBS 109.51 / FGSC 9923 / NRRL Y-1056) (Yeast).